Consider the following 247-residue polypeptide: 7-cyano-7-deazaguanine synthase (247 aa).

Position 21 to 31 (21 to 31 (FSGGQDSTACL)) interacts with ATP. The Zn(2+) site is built by Cys-209, Cys-224, Cys-227, and Cys-230.

The protein belongs to the QueC family. The cofactor is Zn(2+).

It carries out the reaction 7-carboxy-7-deazaguanine + NH4(+) + ATP = 7-cyano-7-deazaguanine + ADP + phosphate + H2O + H(+). The protein operates within purine metabolism; 7-cyano-7-deazaguanine biosynthesis. In terms of biological role, catalyzes the ATP-dependent conversion of 7-carboxy-7-deazaguanine (CDG) to 7-cyano-7-deazaguanine (preQ(0)). The polypeptide is 7-cyano-7-deazaguanine synthase (Halorhodospira halophila (strain DSM 244 / SL1) (Ectothiorhodospira halophila (strain DSM 244 / SL1))).